The primary structure comprises 397 residues: Acetate kinase (397 aa).

N7 is a Mg(2+) binding site. K14 contributes to the ATP binding site. A substrate-binding site is contributed by R91. Residue D148 is the Proton donor/acceptor of the active site. ATP-binding positions include 208 to 212 (HLGNG), 283 to 285 (DFR), and 331 to 335 (GIGEN). E384 serves as a coordination point for Mg(2+).

It belongs to the acetokinase family. In terms of assembly, homodimer. The cofactor is Mg(2+). It depends on Mn(2+) as a cofactor.

The protein localises to the cytoplasm. The catalysed reaction is acetate + ATP = acetyl phosphate + ADP. The protein operates within metabolic intermediate biosynthesis; acetyl-CoA biosynthesis; acetyl-CoA from acetate: step 1/2. Functionally, catalyzes the formation of acetyl phosphate from acetate and ATP. Can also catalyze the reverse reaction. The sequence is that of Acetate kinase from Treponema denticola (strain ATCC 35405 / DSM 14222 / CIP 103919 / JCM 8153 / KCTC 15104).